A 527-amino-acid polypeptide reads, in one-letter code: Protein SDS24 (527 aa).

Composition is skewed to low complexity over residues 1–22 and 55–74; these read MAST…LPTS and TPPT…TPAP. The disordered stretch occupies residues 1–75; it reads MASTSNTFPP…PGCAATPAPL (75 aa). Residue Ser-94 is modified to Phosphoserine. 4 CBS domains span residues 114–175, 198–256, 283–342, and 443–512; these read IEQN…KITV, LTPK…NARS, TSRQ…QYPL, and LNSH…GNKE. The segment covering 424-447 has biased composition (low complexity); the sequence is AQSSANGATPMSKSSSSTSLNSHS. Disordered regions lie at residues 424 to 478 and 508 to 527; these read AQSS…TNTP and TGNK…SIAM. Phosphoserine is present on residues Ser-458 and Ser-524.

It belongs to the SDS23 family.

It localises to the cytoplasm. The protein resides in the nucleus. Involved in DNA replication and cell separation during budding. This Saccharomyces cerevisiae (strain YJM789) (Baker's yeast) protein is Protein SDS24 (SDS24).